Here is a 334-residue protein sequence, read N- to C-terminus: Transcription initiation factor IIB (334 aa).

A TFIIB-type zinc finger spans residues 34-65; the sequence is EELVCPMCDSKNIIKDYEKAEIVCEDCGCVLQ. Residues cysteine 38, cysteine 41, cysteine 57, and cysteine 60 each coordinate Zn(2+). A run of 2 repeats spans residues 151–234 and 245–326.

This sequence belongs to the TFIIB family.

Its function is as follows. Stabilizes TBP binding to an archaeal box-A promoter. Also responsible for recruiting RNA polymerase II to the pre-initiation complex (DNA-TBP-TFIIB). This chain is Transcription initiation factor IIB, found in Methanococcus aeolicus (strain ATCC BAA-1280 / DSM 17508 / OCM 812 / Nankai-3).